The primary structure comprises 353 residues: Very-long-chain 3-oxoacyl-CoA reductase (353 aa).

The helical transmembrane segment at 33–53 (AAWALIAAGGFFVISRALLFG) threads the bilayer. NADP(+) is bound by residues Val-78, Asp-133, Asp-141, Asn-160, Tyr-227, Lys-231, Ile-260, and Ser-262. The Proton donor role is filled by Tyr-227. The Lowers pKa of active site Tyr role is filled by Lys-231.

It belongs to the short-chain dehydrogenases/reductases (SDR) family.

The protein resides in the endoplasmic reticulum membrane. It carries out the reaction a very-long-chain (3R)-3-hydroxyacyl-CoA + NADP(+) = a very-long-chain 3-oxoacyl-CoA + NADPH + H(+). It participates in lipid metabolism; fatty acid biosynthesis. In terms of biological role, component of the microsomal membrane bound fatty acid elongation system, which produces the 26-carbon very long-chain fatty acids (VLCFA) from palmitate. Catalyzes the reduction of the 3-ketoacyl-CoA intermediate that is formed in each cycle of fatty acid elongation. VLCFAs serve as precursors for ceramide and sphingolipids. The protein is Very-long-chain 3-oxoacyl-CoA reductase of Aspergillus terreus (strain NIH 2624 / FGSC A1156).